Reading from the N-terminus, the 503-residue chain is Lysine--tRNA ligase (503 aa).

2 residues coordinate Mg(2+): E413 and E420.

Belongs to the class-II aminoacyl-tRNA synthetase family. As to quaternary structure, homodimer. Requires Mg(2+) as cofactor.

Its subcellular location is the cytoplasm. It catalyses the reaction tRNA(Lys) + L-lysine + ATP = L-lysyl-tRNA(Lys) + AMP + diphosphate. The chain is Lysine--tRNA ligase from Actinobacillus succinogenes (strain ATCC 55618 / DSM 22257 / CCUG 43843 / 130Z).